An 82-amino-acid chain; its full sequence is MSEEKFPERPGEPECSYYLRTGNCYLKQNCKYHHPKNITPSEPQCTLNDKGLPLRPGQAICPHYSRFGICRSGPTCKFDHFT.

2 consecutive C3H1-type zinc fingers follow at residues 9-37 and 55-82; these read RPGE…HPKN and RPGQ…DHFT.

The protein is Zinc finger CCCH domain-containing protein 13 of Arabidopsis thaliana (Mouse-ear cress).